A 334-amino-acid chain; its full sequence is Probable 3-hydroxyisobutyrate dehydrogenase-like 1, mitochondrial (334 aa).

The transit peptide at 1 to 23 (MPLLLRRFPSPSVVSSFFLRRSM) directs the protein to the mitochondrion. Ala24 bears the N-acetylalanine mark. NAD(+)-binding positions include 38-67 (TKIGWIGTGVMGRSMCGHLIKAGYTVTVFN) and Thr133. The active site involves Lys207. NAD(+) is bound at residue Lys275.

It belongs to the HIBADH-related family. 3-hydroxyisobutyrate dehydrogenase subfamily.

It localises to the mitochondrion. It carries out the reaction 3-hydroxy-2-methylpropanoate + NAD(+) = 2-methyl-3-oxopropanoate + NADH + H(+). It participates in amino-acid degradation; L-valine degradation. This Arabidopsis thaliana (Mouse-ear cress) protein is Probable 3-hydroxyisobutyrate dehydrogenase-like 1, mitochondrial.